Here is an 852-residue protein sequence, read N- to C-terminus: Protein mono-ADP-ribosyltransferase PARP8 (852 aa).

Disordered stretches follow at residues 113–134 and 289–310; these read NGEESRQNSTVEEDSEGDNDSE and SPSYPPPGCGKSKSKLKPEQDG. Acidic residues predominate over residues 123–134; it reads VEEDSEGDNDSE. ADP-ribosylcysteine occurs at positions 332, 366, 375, and 394. Residues 615–842 form the PARP catalytic domain; the sequence is EMTQAPYLEI…QEGGIHKEIL (228 aa). Positions 748-775 are disordered; that stretch reads QKVSSKDEPASSSKSSNASQSQKKGQQS. A compositionally biased stretch (low complexity) spans 757–775; it reads ASSSKSSNASQSQKKGQQS.

This sequence belongs to the ARTD/PARP family. Post-translationally, auto-mono-ADP-ribosylated.

The enzyme catalyses L-cysteinyl-[protein] + NAD(+) = S-(ADP-D-ribosyl)-L-cysteinyl-[protein] + nicotinamide + H(+). In terms of biological role, mono-ADP-ribosyltransferase that mediates mono-ADP-ribosylation of target proteins. The protein is Protein mono-ADP-ribosyltransferase PARP8 of Mus musculus (Mouse).